We begin with the raw amino-acid sequence, 304 residues long: Retrotransposon Gag-like protein 4 (304 aa).

The CCHC-type zinc finger occupies 276–293 (QLCVYCNQAGHFTRDCLA).

In adults, expressed in brain, eye, kidney, ovary and testis. Weakly expressed in thymus, heart and muscle.

Functionally, involved in cognitive function in the brain, possibly via the noradrenergic system. In Mus musculus (Mouse), this protein is Retrotransposon Gag-like protein 4.